We begin with the raw amino-acid sequence, 262 residues long: Nitrilase (262 aa).

The 236-residue stretch at 2–237 (VKVAYVQMNP…EEVGVAEIDL (236 aa)) folds into the CN hydrolase domain. E42 acts as the Proton acceptor in catalysis. Catalysis depends on K113, which acts as the Proton donor. The active-site Nucleophile is C146. 173-174 (VM) is a binding site for substrate.

Belongs to the carbon-nitrogen hydrolase superfamily. Homodimer.

The catalysed reaction is a nitrile + 2 H2O = a carboxylate + NH4(+). Enzymatic activity is inhibited in the presence of acetone, methanol and metal ions such as Ag(2+) and Hg(2+). Is also inhibited by various thiol reagents such as DTNB, p-chloromercuribenzoate, p-hydroxymercuribenzoate, iodacetamide and iodacetate. EDTA has no influence on activity. In terms of biological role, nitrilase that hydrolyzes preferentially aliphatic nitriles like malononitrile and fumaronitrile in vitro. These dinitriles are converted to the corresponding monoacid mononitriles, showing the enzyme is regioselective. Cannot hydrolyze compounds with a nitrile group bound to an aromatic ring or amino acid. Its biological role is unknown. The polypeptide is Nitrilase (Pyrococcus abyssi (strain GE5 / Orsay)).